We begin with the raw amino-acid sequence, 173 residues long: Transcriptional repressor NrdR (173 aa).

A zinc finger spans residues 3-34 (CPYCGSLDTQVKDSRPTEDNTAIRRRRVCPDC). In terms of domain architecture, ATP-cone spans 49–139 (LMVVKRSGRR…VYRNFREARD (91 aa)).

It belongs to the NrdR family. Zn(2+) serves as cofactor.

Its function is as follows. Negatively regulates transcription of bacterial ribonucleotide reductase nrd genes and operons by binding to NrdR-boxes. The protein is Transcriptional repressor NrdR of Azorhizobium caulinodans (strain ATCC 43989 / DSM 5975 / JCM 20966 / LMG 6465 / NBRC 14845 / NCIMB 13405 / ORS 571).